A 661-amino-acid polypeptide reads, in one-letter code: Peroxisomal acyl-coenzyme A oxidase 1 (661 aa).

Ser-26 bears the Phosphoserine mark. The residue at position 65 (Lys-65) is an N6-acetyllysine. N6-succinyllysine occurs at positions 89 and 90. Residue Thr-139 coordinates FAD. Lys-159 is subject to N6-succinyllysine. Gly-178 is an FAD binding site. The residue at position 216 (Lys-216) is an N6-acetyllysine. Lys-241 carries the post-translational modification N6-succinyllysine. N6-acetyllysine occurs at positions 255, 267, and 272. Residue Lys-349 is modified to N6-succinyllysine. The active-site Proton acceptor is Glu-421. Lys-437 and Lys-446 each carry N6-acetyllysine; alternate. Lys-437 and Lys-446 each carry N6-succinyllysine; alternate. Position 500 is an N6-acetyllysine (Lys-500). Lys-512 is subject to N6-acetyllysine; alternate. At Lys-512 the chain carries N6-succinyllysine; alternate. An N6-succinyllysine modification is found at Lys-542. N6-acetyllysine; alternate is present on Lys-637. N6-succinyllysine; alternate is present on Lys-637. At Lys-643 the chain carries N6-succinyllysine. Phosphoserine is present on Ser-649. Position 652 is an N6-acetyllysine (Lys-652). An N6-succinyllysine modification is found at Lys-655. The short motif at 659-661 is the Microbody targeting signal element; sequence SKL.

It belongs to the acyl-CoA oxidase family. As to quaternary structure, homodimer. Interacts with LONP2. FAD is required as a cofactor. As to expression, highest levels of isoform 1 are found in liver and kidney while highest levels of isoform 2 are found in white adipose tissue. Isoform 1 is expressed at higher levels than isoform 2 in liver and kidney while isoform 2 is expressed at higher levels in brain, heart, lung, muscle, white adipose tissue and testis.

It is found in the peroxisome. The enzyme catalyses a 2,3-saturated acyl-CoA + O2 = a (2E)-enoyl-CoA + H2O2. It carries out the reaction hexadecanoyl-CoA + O2 = (2E)-hexadecenoyl-CoA + H2O2. It catalyses the reaction dodecanoyl-CoA + O2 = (2E)-dodecenoyl-CoA + H2O2. The catalysed reaction is octanoyl-CoA + O2 = (2E)-octenoyl-CoA + H2O2. The enzyme catalyses decanoyl-CoA + O2 = (2E)-decenoyl-CoA + H2O2. It carries out the reaction tetradecanoyl-CoA + O2 = (2E)-tetradecenoyl-CoA + H2O2. It catalyses the reaction hexadecanedioyl-CoA + O2 = (2E)-hexadecenedioyl-CoA + H2O2. The catalysed reaction is tetracosanoyl-CoA + O2 = (2E)-tetracosenoyl-CoA + H2O2. The enzyme catalyses glutaryl-CoA + O2 = (2E)-glutaconyl-CoA + H2O2. It carries out the reaction hexanoyl-CoA + O2 = (2E)-hexenoyl-CoA + H2O2. It catalyses the reaction octadecanoyl-CoA + O2 = (2E)-octadecenoyl-CoA + H2O2. The catalysed reaction is (5Z,8Z,11Z,14Z,17Z)-eicosapentaenoyl-CoA + O2 = (2E,5Z,8Z,11Z,14Z,17Z)-icosahexaenoyl-CoA + H2O2. The enzyme catalyses (6Z,9Z,12Z,15Z,18Z,21Z)-tetracosahexaenoyl-CoA + O2 = (2E,6Z,9Z,12Z,15Z,18Z,21Z)-tetracosaheptaenoyl-CoA + H2O2. It participates in lipid metabolism; peroxisomal fatty acid beta-oxidation. Involved in the initial and rate-limiting step of peroxisomal beta-oxidation of straight-chain saturated and unsaturated very-long-chain fatty acids. Catalyzes the desaturation of fatty acyl-CoAs such as palmitoyl-CoA (hexadecanoyl-CoA) to 2-trans-enoyl-CoAs ((2E)-enoyl-CoAs) such as (2E)-hexadecenoyl-CoA, and donates electrons directly to molecular oxygen (O(2)), thereby producing hydrogen peroxide (H(2)O(2)). In terms of biological role, shows highest activity against medium-chain fatty acyl-CoAs. Shows optimum activity with a chain length of 10 carbons (decanoyl-CoA) in vitro. Functionally, is active against a much broader range of substrates and shows activity towards long-chain acyl-CoAs. In Mus musculus (Mouse), this protein is Peroxisomal acyl-coenzyme A oxidase 1.